A 356-amino-acid chain; its full sequence is 3-dehydroquinate synthase (356 aa).

Residues 101–105 (GVIGD), 125–126 (TT), Lys138, and Lys147 contribute to the NAD(+) site. Positions 180, 243, and 260 each coordinate Zn(2+).

Belongs to the sugar phosphate cyclases superfamily. Dehydroquinate synthase family. Requires Co(2+) as cofactor. Zn(2+) is required as a cofactor. It depends on NAD(+) as a cofactor.

The protein resides in the cytoplasm. It carries out the reaction 7-phospho-2-dehydro-3-deoxy-D-arabino-heptonate = 3-dehydroquinate + phosphate. It participates in metabolic intermediate biosynthesis; chorismate biosynthesis; chorismate from D-erythrose 4-phosphate and phosphoenolpyruvate: step 2/7. Catalyzes the conversion of 3-deoxy-D-arabino-heptulosonate 7-phosphate (DAHP) to dehydroquinate (DHQ). The polypeptide is 3-dehydroquinate synthase (Alkaliphilus metalliredigens (strain QYMF)).